The following is a 204-amino-acid chain: Acyl-homoserine-lactone synthase (204 aa).

This sequence belongs to the autoinducer synthase family.

It catalyses the reaction a fatty acyl-[ACP] + S-adenosyl-L-methionine = an N-acyl-L-homoserine lactone + S-methyl-5'-thioadenosine + holo-[ACP] + H(+). Functionally, required for the synthesis of acyl-HSL autoinducers that bind to SolR. This Ralstonia solanacearum (Pseudomonas solanacearum) protein is Acyl-homoserine-lactone synthase (solI).